The following is a 319-amino-acid chain: Thioredoxin reductase (319 aa).

FAD is bound at residue 36–43 (TGINKGGQ). Cys-136 and Cys-139 are joined by a disulfide. 288–297 (DVIDHVYRQA) serves as a coordination point for FAD.

This sequence belongs to the class-II pyridine nucleotide-disulfide oxidoreductase family. In terms of assembly, homodimer. Requires FAD as cofactor.

The protein resides in the cytoplasm. The enzyme catalyses [thioredoxin]-dithiol + NADP(+) = [thioredoxin]-disulfide + NADPH + H(+). The chain is Thioredoxin reductase (trxB) from Buchnera aphidicola subsp. Schizaphis graminum (strain Sg).